The chain runs to 98 residues: NADH-ubiquinone oxidoreductase chain 4L (98 aa).

3 helical membrane-spanning segments follow: residues 1 to 21 (MSLTYMNMFMAFTISLLGLLM), 29 to 49 (SLLCLEGMMLSLFVMMTMVIL), and 61 to 81 (IILLVFAACEAALGLSLLVMV).

This sequence belongs to the complex I subunit 4L family. Core subunit of respiratory chain NADH dehydrogenase (Complex I) which is composed of 45 different subunits.

The protein resides in the mitochondrion inner membrane. It catalyses the reaction a ubiquinone + NADH + 5 H(+)(in) = a ubiquinol + NAD(+) + 4 H(+)(out). Core subunit of the mitochondrial membrane respiratory chain NADH dehydrogenase (Complex I) which catalyzes electron transfer from NADH through the respiratory chain, using ubiquinone as an electron acceptor. Part of the enzyme membrane arm which is embedded in the lipid bilayer and involved in proton translocation. The polypeptide is NADH-ubiquinone oxidoreductase chain 4L (MT-ND4L) (Vampyressa thyone (Northern little yellow-eared bat)).